Reading from the N-terminus, the 332-residue chain is DNA packaging protein (332 aa).

The ATPase stretch occupies residues 1–207 (MDKSLFYNPQ…SERRKTRFGR (207 aa)). Position 24 to 31 (24 to 31 (GARGIGKS)) interacts with ATP. The tract at residues 233 to 332 (KRSKDSKFVF…YELFRKMRIQ (100 aa)) is DNA-binding.

Belongs to the phi29likevirus gp16 family. As to quaternary structure, homopentamer. Interacts with the packaging RNA (pRNA). Part of a DNA-gp3-gp16 complex.

It catalyses the reaction ATP + H2O = ADP + phosphate + H(+). ATPase required for the genome encapsidation reaction. Part of the active packaging motor via the binding to the packaging RNA (pRNA), itself fixed to the head-tail connector at the unique portal vertex of the prohead. Binds and supercoils the pre-formed, unit-length DNA bound to gp3 to produce an initiation complex for DNA packaging. Provides the energy to actively pump the viral DNA into the prohead. Approximately one molecule of ATP is used in the packaging of 2 bp of viral DNA. ATP hydrolysis results in a conformational change that causes the arginine/lysine finger of one subunit to move into the active site of its neighbor, where it interacts with the negatively charged oxygens on the gamma-phosphate of ATP. After packaging, the ATPase and the pRNA are released from the prohead. The protein is DNA packaging protein (16) of Bacillus phage phi29 (Bacteriophage phi-29).